A 65-amino-acid polypeptide reads, in one-letter code: Small, acid-soluble spore protein H 1 (65 aa).

It belongs to the SspH family.

It localises to the spore core. The sequence is that of Small, acid-soluble spore protein H 1 from Clostridium botulinum (strain Langeland / NCTC 10281 / Type F).